A 302-amino-acid polypeptide reads, in one-letter code: Small ribosomal subunit protein uS3 (302 aa).

In terms of domain architecture, KH type-2 spans 17–86 (IDEFFAEELA…DPQIDVQEVE (70 aa)). Positions 222–302 (EDADAEDADA…EMDDEDGGAE (81 aa)) are disordered.

It belongs to the universal ribosomal protein uS3 family. As to quaternary structure, part of the 30S ribosomal subunit.

In terms of biological role, binds the lower part of the 30S subunit head. This chain is Small ribosomal subunit protein uS3, found in Halobacterium salinarum (strain ATCC 700922 / JCM 11081 / NRC-1) (Halobacterium halobium).